A 111-amino-acid chain; its full sequence is uncharacterized protein (111 aa).

The segment at 1–26 (MDLKDGVEEEEGAGENGKGGTHAQRV) is disordered.

This is an uncharacterized protein from Caenorhabditis elegans.